We begin with the raw amino-acid sequence, 197 residues long: Peptide deformylase (197 aa).

Cys106 and His148 together coordinate Fe cation. The active site involves Glu149. His152 provides a ligand contact to Fe cation.

This sequence belongs to the polypeptide deformylase family. Fe(2+) is required as a cofactor.

It catalyses the reaction N-terminal N-formyl-L-methionyl-[peptide] + H2O = N-terminal L-methionyl-[peptide] + formate. Functionally, removes the formyl group from the N-terminal Met of newly synthesized proteins. Requires at least a dipeptide for an efficient rate of reaction. N-terminal L-methionine is a prerequisite for activity but the enzyme has broad specificity at other positions. The chain is Peptide deformylase from Mycobacterium sp. (strain JLS).